The following is a 504-amino-acid chain: Sucrose phosphorylase (504 aa).

Aspartate 50 is a binding site for substrate. Sucrose contacts are provided by residues histidine 88, 190–192 (RLD), glutamate 232, 289–290 (HD), 342–345 (DLYQ), and arginine 399. The active-site Nucleophile is the aspartate 192. The active-site Proton donor is the glutamate 232.

It belongs to the glycosyl hydrolase 13 family. Sucrose phosphorylase subfamily. As to quaternary structure, homodimer.

It catalyses the reaction sucrose + phosphate = D-fructose + alpha-D-glucose 1-phosphate. In terms of biological role, catalyzes the reversible phosphorolysis of sucrose into alpha-D-glucose 1-phosphate (Glc1P) and D-fructose. Is involved in sucrose degradation. Also displays transglucosylation activity in vitro, by transferring the glucosyl moiety of Glc1P to a broad range of monomeric sugars, such as D- and L-arabinose, D- and L-arabitol, and xylitol. The chain is Sucrose phosphorylase from Bifidobacterium adolescentis (strain ATCC 15703 / DSM 20083 / NCTC 11814 / E194a).